The primary structure comprises 174 residues: Adenine phosphoribosyltransferase (174 aa).

This sequence belongs to the purine/pyrimidine phosphoribosyltransferase family. As to quaternary structure, homodimer.

It localises to the cytoplasm. It catalyses the reaction AMP + diphosphate = 5-phospho-alpha-D-ribose 1-diphosphate + adenine. The protein operates within purine metabolism; AMP biosynthesis via salvage pathway; AMP from adenine: step 1/1. In terms of biological role, catalyzes a salvage reaction resulting in the formation of AMP, that is energically less costly than de novo synthesis. This chain is Adenine phosphoribosyltransferase, found in Agathobacter rectalis (strain ATCC 33656 / DSM 3377 / JCM 17463 / KCTC 5835 / VPI 0990) (Eubacterium rectale).